Here is a 283-residue protein sequence, read N- to C-terminus: Elongation factor Ts (283 aa).

The interval 80–83 is involved in Mg(2+) ion dislocation from EF-Tu; it reads TDFV.

It belongs to the EF-Ts family.

It localises to the cytoplasm. In terms of biological role, associates with the EF-Tu.GDP complex and induces the exchange of GDP to GTP. It remains bound to the aminoacyl-tRNA.EF-Tu.GTP complex up to the GTP hydrolysis stage on the ribosome. In Pectobacterium carotovorum subsp. carotovorum (strain PC1), this protein is Elongation factor Ts.